We begin with the raw amino-acid sequence, 385 residues long: Rubredoxin-NAD(+) reductase (385 aa).

FAD contacts are provided by residues 8–11, 32–33, Ile-79, Glu-156, Asp-275, and Ile-293; these read AGTA and SR.

This sequence belongs to the FAD-dependent oxidoreductase family. As to quaternary structure, homodimer. FAD is required as a cofactor.

It is found in the cytoplasm. It carries out the reaction 2 reduced [rubredoxin] + NAD(+) + H(+) = 2 oxidized [rubredoxin] + NADH. Its pathway is hydrocarbon metabolism; alkane degradation. Involved in the hydrocarbon hydroxylating system, which transfers electrons from NADH to rubredoxin reductase and then through rubredoxin to alkane 1 monooxygenase. The chain is Rubredoxin-NAD(+) reductase (alkT) from Ectopseudomonas oleovorans (Pseudomonas oleovorans).